A 683-amino-acid polypeptide reads, in one-letter code: MTTAPVSAAERHAALEADLAQWDEAYHGRDEPEVSDAVYDAARRELLALEEAYPDLRSQEGASQRVGATPDSAFGKYRHLVPMLSLDNVFDPEGFDGFVSRVGRFLGLDEDGLQALQFVAEPKIDGLSISLTYEHGHFVRGTTRGDGIEGEDVTANLLTLKDIPRELPGEAPERVEIRGEVFLSKSSFLTLNEQQVARGAKPFANPRNAAAGSLRQLDAEITRSRPLSLFAYAQGYTSSPVATTHWDYLEKLRSWGFTVNPLSQMIAHARDIPAYVEKLARERSELDYDIDGIVFKLDDLSLQDRLGFAGRAPRWAIAWKFPAEQAITRLREIEIQVGRTGALTPVAHLEPVNVGGVIVSRATLHNEDEIARKDVRVGDLVRLQRAGDVIPQILGPVPSEEPRSEPFVYPDHCPVCGSLAERVHGEAVRRCTGGLTCEAQIVERLIHMVSRNAFDIDGLGERSIREFYDAGYIRRPGDIFRLRQHEEALLQRDGWGRLSVDNLFRAIEDRRTIPLSRLIFGLGIRRIGERNAQLLARHYQTFENWRTAMLAARPDSEERASLGAIMGVGDAIADELSAFFSESHNIETLDDLALELKDIIAEEAPSEGHLSGKVIVFTGTLTTMSRPEAKAIAERLGAQVTDSVSKKTSLVVLGEKAGSKAKKAAELGIETVDESGWRVLAGL.

NAD(+) is bound by residues 36 to 40 (DAVYD), 85 to 86 (SL), and Glu121. Lys123 acts as the N6-AMP-lysine intermediate in catalysis. Residues Arg144, Glu180, Lys296, and Lys320 each contribute to the NAD(+) site. Residues Cys413, Cys416, Cys431, and Cys437 each coordinate Zn(2+). One can recognise a BRCT domain in the interval 605-683 (PSEGHLSGKV…ESGWRVLAGL (79 aa)).

It belongs to the NAD-dependent DNA ligase family. LigA subfamily. Mg(2+) serves as cofactor. The cofactor is Mn(2+).

The catalysed reaction is NAD(+) + (deoxyribonucleotide)n-3'-hydroxyl + 5'-phospho-(deoxyribonucleotide)m = (deoxyribonucleotide)n+m + AMP + beta-nicotinamide D-nucleotide.. DNA ligase that catalyzes the formation of phosphodiester linkages between 5'-phosphoryl and 3'-hydroxyl groups in double-stranded DNA using NAD as a coenzyme and as the energy source for the reaction. It is essential for DNA replication and repair of damaged DNA. The polypeptide is DNA ligase (Gluconobacter oxydans (strain 621H) (Gluconobacter suboxydans)).